The following is a 258-amino-acid chain: Hydroxyacylglutathione hydrolase (258 aa).

Residues H55, H57, D59, H60, H115, D132, and H170 each contribute to the Zn(2+) site.

The protein belongs to the metallo-beta-lactamase superfamily. Glyoxalase II family. As to quaternary structure, monomer. Requires Zn(2+) as cofactor.

The catalysed reaction is an S-(2-hydroxyacyl)glutathione + H2O = a 2-hydroxy carboxylate + glutathione + H(+). The protein operates within secondary metabolite metabolism; methylglyoxal degradation; (R)-lactate from methylglyoxal: step 2/2. Its function is as follows. Thiolesterase that catalyzes the hydrolysis of S-D-lactoyl-glutathione to form glutathione and D-lactic acid. This Shewanella halifaxensis (strain HAW-EB4) protein is Hydroxyacylglutathione hydrolase.